The primary structure comprises 610 residues: E-selectin (610 aa).

The N-terminal stretch at 1 to 21 (MIASQFLSALTLVLLIKESGA) is a signal peptide. One can recognise a C-type lectin domain in the interval 22–138 (WSYSASTTNM…CNKKKLALCY (117 aa)). The Extracellular portion of the chain corresponds to 22–555 (WSYSASTTNM…CEATAKSNIP (534 aa)). N30 carries N-linked (GlcNAc...) asparagine glycosylation. Disulfide bonds link C40/C137, C110/C129, C142/C153, C147/C162, C164/C173, C179/C223, C192/C205, C209/C236, C241/C285, C254/C267, C271/C298, C303/C348, C334/C361, C366/C411, C397/C424, C429/C474, C460/C487, C492/C533, and C519/C546. Positions 101, 103, and 108 each coordinate Ca(2+). Residues 101-108 (EPNNKQNE), 112-117 (EIYIKR), and 125-127 (NDE) each bind a carbohydrate. Ca(2+) contacts are provided by N125 and D126. An EGF-like domain is found at 139–174 (TAACTHTSCSGHGECVETINNYTCQCHPGFTGLRCE). N-linked (GlcNAc...) asparagine glycosylation is present at N159. Sushi domains are found at residues 177 to 238 (VTCQ…ACHV), 239 to 300 (VECD…TCKA), 314 to 363 (VNCS…VCKA), 365 to 426 (QCKA…TCEA), 428 to 489 (RCDA…SCQV), and 490 to 548 (VQCA…TCEA). 2 N-linked (GlcNAc...) asparagine glycosylation sites follow: N198 and N202. The N-linked (GlcNAc...) asparagine glycan is linked to N264. Residues N315, N327, and N331 are each glycosylated (N-linked (GlcNAc...) asparagine). An N-linked (GlcNAc...) asparagine glycan is attached at N526. A helical membrane pass occupies residues 556-577 (LTVGLSAAGTSLLTLASFLFWL). The Cytoplasmic segment spans residues 578 to 610 (LKRLRRKAKKFVPASSYQSLQSDGSYQMPSESA).

Belongs to the selectin/LECAM family. In terms of assembly, interacts with SELPLG/PSGL1 and PODXL2 through the sialyl Lewis X epitope. SELPLG sulfation appears not to be required for this interaction.

Its subcellular location is the cell membrane. In terms of biological role, cell-surface glycoprotein having a role in immunoadhesion. Mediates in the adhesion of blood neutrophils in cytokine-activated endothelium through interaction with SELPLG/PSGL1. May have a role in capillary morphogenesis. The polypeptide is E-selectin (SELE) (Equus caballus (Horse)).